We begin with the raw amino-acid sequence, 216 residues long: GTP cyclohydrolase 1 (216 aa).

Residues C108, H111, and C179 each coordinate Zn(2+).

This sequence belongs to the GTP cyclohydrolase I family. As to quaternary structure, toroid-shaped homodecamer, composed of two pentamers of five dimers.

The enzyme catalyses GTP + H2O = 7,8-dihydroneopterin 3'-triphosphate + formate + H(+). The protein operates within cofactor biosynthesis; 7,8-dihydroneopterin triphosphate biosynthesis; 7,8-dihydroneopterin triphosphate from GTP: step 1/1. This Shewanella amazonensis (strain ATCC BAA-1098 / SB2B) protein is GTP cyclohydrolase 1.